Here is a 201-residue protein sequence, read N- to C-terminus: MEAFTKHTGLAVMIDSANVDTDQIIPKQFLSKVTRDGFGVHLFHDWRYLDDAGDEPNPEFTLNQSRYKGASILISKENFGCGSSREHAPWALADFGLRAIIAPSFADIFYGNSINNGLLPVRLSDVEVQQLMDEVQANEGAEITVDLEGLTVTSPSGAVFSFEIAGSARHNMLNGLDAIGLTLAYDVQIASYESQLPAWKA.

Belongs to the LeuD family. LeuD type 1 subfamily. As to quaternary structure, heterodimer of LeuC and LeuD.

The catalysed reaction is (2R,3S)-3-isopropylmalate = (2S)-2-isopropylmalate. Its pathway is amino-acid biosynthesis; L-leucine biosynthesis; L-leucine from 3-methyl-2-oxobutanoate: step 2/4. In terms of biological role, catalyzes the isomerization between 2-isopropylmalate and 3-isopropylmalate, via the formation of 2-isopropylmaleate. The sequence is that of 3-isopropylmalate dehydratase small subunit from Shewanella woodyi (strain ATCC 51908 / MS32).